Consider the following 140-residue polypeptide: MTQKVEFPPRHVTEEKLMEFARAVHTQNKIYHSTAAATSSGYPGLVAVPTFGAVWVGQILEYIISSDLNIDYSHIVHGEQHFLYKRPIFAGDILRPILRIKRDRAFGNARQIVLEVTLLSEGSNDDVLVMTITLIVRGKA.

This sequence belongs to the UPF0336 family.

The protein is UPF0336 protein TW736 of Tropheryma whipplei (strain TW08/27) (Whipple's bacillus).